The sequence spans 215 residues: AN1-type zinc finger protein C1271.05c (215 aa).

A compositionally biased stretch (polar residues) spans 116–128 (IPSISKSNLTNPP). The disordered stretch occupies residues 116–138 (IPSISKSNLTNPPLESEKSSDKA). The segment at 144–193 (ATSRRRCCHPTCTRITLRLAGNCLHCNGRFCAAHRLMEDHDCVALFSLRK) adopts an AN1-type zinc-finger fold. Positions 150, 155, 166, 169, 174, 177, 183, and 185 each coordinate Zn(2+).

It localises to the cytoplasm. Its subcellular location is the nucleus. The polypeptide is AN1-type zinc finger protein C1271.05c (Schizosaccharomyces pombe (strain 972 / ATCC 24843) (Fission yeast)).